Reading from the N-terminus, the 121-residue chain is Small ribosomal subunit protein uS13 (121 aa).

Residues 97-121 are disordered; that stretch reads VRGQRTRTNARTRRGARKTVAGRKK. Over residues 100–121 the composition is skewed to basic residues; it reads QRTRTNARTRRGARKTVAGRKK.

It belongs to the universal ribosomal protein uS13 family. Part of the 30S ribosomal subunit. Forms a loose heterodimer with protein S19. Forms two bridges to the 50S subunit in the 70S ribosome.

Functionally, located at the top of the head of the 30S subunit, it contacts several helices of the 16S rRNA. In the 70S ribosome it contacts the 23S rRNA (bridge B1a) and protein L5 of the 50S subunit (bridge B1b), connecting the 2 subunits; these bridges are implicated in subunit movement. Contacts the tRNAs in the A and P-sites. The protein is Small ribosomal subunit protein uS13 of Prochlorococcus marinus (strain NATL1A).